The following is a 323-amino-acid chain: MEYNEFEIISKFFKNHQKKDKNQIKGIGDDSALIKIPKNNLLAISTDTLVEGKHFLKNITPKDLAYKSVAVNLSDLAAMGAKPTWITLSITMPKSDSVWLKSFSKSFFKILNKYKLNLIGGDTNSGPLSITLSIYGLIEGKNALLRGNAKNGDLIYITGNLGESAAGLSLLQKKTFLKNVKICNYLIKKHLKPIPRISEGIALRNIANAAIDISDGLISDLGHILKNSKCGADINLNTIPISKILTDNFKIDEYLNWALNSGEDYELCFTISKKNIKKLNVAIKKKIIKCTCIGYITSAEKGLNLIQNQKKIIFKKSGFNHFI.

Residues Asp30, Ser45, Thr46, and Asp47 each coordinate Mg(2+). His54 is a substrate binding site. Asp75 and Asp122 together coordinate Mg(2+). ATP-binding positions include 121–122 (GD) and Arg146. Asp212 lines the Mg(2+) pocket. ATP is bound at residue Ser214. Asp215 contacts Mg(2+). Substrate-binding residues include Glu263 and Phe319.

The protein belongs to the thiamine-monophosphate kinase family.

It catalyses the reaction thiamine phosphate + ATP = thiamine diphosphate + ADP. It functions in the pathway cofactor biosynthesis; thiamine diphosphate biosynthesis; thiamine diphosphate from thiamine phosphate: step 1/1. In terms of biological role, catalyzes the ATP-dependent phosphorylation of thiamine-monophosphate (TMP) to form thiamine-pyrophosphate (TPP), the active form of vitamin B1. In Buchnera aphidicola subsp. Schizaphis graminum (strain Sg), this protein is Thiamine-monophosphate kinase.